A 480-amino-acid chain; its full sequence is Glutamate--tRNA ligase (480 aa).

The 'HIGH' region signature appears at 21 to 31; it reads PSPTGYLHVGG. Residues cysteine 110, cysteine 112, cysteine 137, and histidine 139 each coordinate Zn(2+). A 'KMSKS' region motif is present at residues 248–252; the sequence is KLSKR. Residue lysine 251 coordinates ATP.

Belongs to the class-I aminoacyl-tRNA synthetase family. Glutamate--tRNA ligase type 1 subfamily. In terms of assembly, monomer. Requires Zn(2+) as cofactor.

The protein resides in the cytoplasm. The enzyme catalyses tRNA(Glu) + L-glutamate + ATP = L-glutamyl-tRNA(Glu) + AMP + diphosphate. Functionally, catalyzes the attachment of glutamate to tRNA(Glu) in a two-step reaction: glutamate is first activated by ATP to form Glu-AMP and then transferred to the acceptor end of tRNA(Glu). This Histophilus somni (strain 2336) (Haemophilus somnus) protein is Glutamate--tRNA ligase.